The following is a 271-amino-acid chain: Ribosomal RNA small subunit methyltransferase I (271 aa).

It belongs to the methyltransferase superfamily. RsmI family.

It is found in the cytoplasm. It catalyses the reaction cytidine(1402) in 16S rRNA + S-adenosyl-L-methionine = 2'-O-methylcytidine(1402) in 16S rRNA + S-adenosyl-L-homocysteine + H(+). In terms of biological role, catalyzes the 2'-O-methylation of the ribose of cytidine 1402 (C1402) in 16S rRNA. The chain is Ribosomal RNA small subunit methyltransferase I from Campylobacter fetus subsp. fetus (strain 82-40).